A 224-amino-acid polypeptide reads, in one-letter code: Ribose-5-phosphate isomerase A (224 aa).

Substrate-binding positions include 33-36 (TGST), 86-89 (DGAD), and 99-102 (KGGG). The Proton acceptor role is filled by Glu108. Lys126 is a binding site for substrate.

Belongs to the ribose 5-phosphate isomerase family. In terms of assembly, homodimer.

The catalysed reaction is aldehydo-D-ribose 5-phosphate = D-ribulose 5-phosphate. It functions in the pathway carbohydrate degradation; pentose phosphate pathway; D-ribose 5-phosphate from D-ribulose 5-phosphate (non-oxidative stage): step 1/1. In terms of biological role, catalyzes the reversible conversion of ribose-5-phosphate to ribulose 5-phosphate. The protein is Ribose-5-phosphate isomerase A of Bordetella avium (strain 197N).